We begin with the raw amino-acid sequence, 626 residues long: Nuclear RNA export factor 2 (626 aa).

S34 is modified (phosphoserine). One can recognise an RRM domain in the interval W124 to Y203. LRR repeat units follow at residues E271–P296, K297–L320, K321–D348, and C349–K376. An NTF2 domain is found at L391–V541. The 56-residue stretch at Q570 to I625 folds into the TAP-C domain.

It belongs to the NXF family. In terms of assembly, interacts with NXT1, NXT2, E1B-AP5, the REF proteins and with nucleoporins, Nup62, Nup153 and Nup214. Interacts with LUZP4. As to expression, expressed almost exclusively in testis. Also expressed in several cancers.

The protein localises to the nucleus. The protein resides in the nucleoplasm. It localises to the cytoplasm. Functionally, involved in the export of mRNA from the nucleus to the cytoplasm. In Homo sapiens (Human), this protein is Nuclear RNA export factor 2 (NXF2).